The following is a 297-amino-acid chain: Juvenile hormone acid O-methyltransferase (297 aa).

It belongs to the methyltransferase superfamily. As to expression, predominantly expressed in corpora allata. Also expressed at low level in testis.

It carries out the reaction (2E,6E)-farnesoate + S-adenosyl-L-methionine = methyl (2E,6E)-farnesoate + S-adenosyl-L-homocysteine. It catalyses the reaction juvenile hormone III carboxylate + S-adenosyl-L-methionine = juvenile hormone III + S-adenosyl-L-homocysteine. In terms of biological role, O-methyltransferase that transfers a methyl group from S-adenosyl-L-methionine (SAM) to the carboxyl group of juvenile hormone acids to produce active juvenile hormones in the corpora allata, the last step during juvenile hormone biosynthesis. Also able to methylate farnesoate to methyl farnesoate. The chain is Juvenile hormone acid O-methyltransferase from Drosophila melanogaster (Fruit fly).